The following is a 405-amino-acid chain: Acetylornithine aminotransferase 1 (405 aa).

Residues 108-109 (GA) and phenylalanine 141 each bind pyridoxal 5'-phosphate. Arginine 144 provides a ligand contact to N(2)-acetyl-L-ornithine. 226 to 229 (DEVQ) contributes to the pyridoxal 5'-phosphate binding site. Lysine 255 carries the post-translational modification N6-(pyridoxal phosphate)lysine. Threonine 283 is a N(2)-acetyl-L-ornithine binding site. Threonine 284 serves as a coordination point for pyridoxal 5'-phosphate.

This sequence belongs to the class-III pyridoxal-phosphate-dependent aminotransferase family. ArgD subfamily. In terms of assembly, homodimer. Requires pyridoxal 5'-phosphate as cofactor.

The protein localises to the cytoplasm. It catalyses the reaction N(2)-acetyl-L-ornithine + 2-oxoglutarate = N-acetyl-L-glutamate 5-semialdehyde + L-glutamate. Its pathway is amino-acid biosynthesis; L-arginine biosynthesis; N(2)-acetyl-L-ornithine from L-glutamate: step 4/4. The sequence is that of Acetylornithine aminotransferase 1 from Pseudomonas syringae pv. tomato (strain ATCC BAA-871 / DC3000).